The primary structure comprises 351 residues: Protein-glutamate methylesterase/protein-glutamine glutaminase 2 (351 aa).

Residues 5–122 (RVICVDDSAL…RDGLLDYSEL (118 aa)) enclose the Response regulatory domain. Position 56 is a 4-aspartylphosphate (Asp56). The region spanning 154–341 (LNSSEKLVIL…PLPAMSERIL (188 aa)) is the CheB-type methylesterase domain. Catalysis depends on residues Ser166, His192, and Asp289.

It belongs to the CheB family. Post-translationally, phosphorylated by CheA. Phosphorylation of the N-terminal regulatory domain activates the methylesterase activity.

It localises to the cytoplasm. It carries out the reaction [protein]-L-glutamate 5-O-methyl ester + H2O = L-glutamyl-[protein] + methanol + H(+). The catalysed reaction is L-glutaminyl-[protein] + H2O = L-glutamyl-[protein] + NH4(+). In terms of biological role, involved in chemotaxis. Part of a chemotaxis signal transduction system that modulates chemotaxis in response to various stimuli. Catalyzes the demethylation of specific methylglutamate residues introduced into the chemoreceptors (methyl-accepting chemotaxis proteins or MCP) by CheR. Also mediates the irreversible deamidation of specific glutamine residues to glutamic acid. The protein is Protein-glutamate methylesterase/protein-glutamine glutaminase 2 of Bordetella avium (strain 197N).